The chain runs to 368 residues: Phospho-N-acetylmuramoyl-pentapeptide-transferase (368 aa).

Helical transmembrane passes span 34-54 (GAVV…IDHL), 79-99 (TPTM…VLWA), 102-122 (LNPY…VGFY), 140-160 (ARIL…VRLG), 176-196 (LVIK…VGAG), 207-227 (GLAI…AYLA), 247-267 (LAVL…FNAP), 271-291 (IFMG…IAVA), 296-316 (IVLA…IVQV), and 345-365 (QIVI…LSTL).

Belongs to the glycosyltransferase 4 family. MraY subfamily. The cofactor is Mg(2+).

Its subcellular location is the cell inner membrane. It carries out the reaction UDP-N-acetyl-alpha-D-muramoyl-L-alanyl-gamma-D-glutamyl-meso-2,6-diaminopimeloyl-D-alanyl-D-alanine + di-trans,octa-cis-undecaprenyl phosphate = di-trans,octa-cis-undecaprenyl diphospho-N-acetyl-alpha-D-muramoyl-L-alanyl-D-glutamyl-meso-2,6-diaminopimeloyl-D-alanyl-D-alanine + UMP. The protein operates within cell wall biogenesis; peptidoglycan biosynthesis. In terms of biological role, catalyzes the initial step of the lipid cycle reactions in the biosynthesis of the cell wall peptidoglycan: transfers peptidoglycan precursor phospho-MurNAc-pentapeptide from UDP-MurNAc-pentapeptide onto the lipid carrier undecaprenyl phosphate, yielding undecaprenyl-pyrophosphoryl-MurNAc-pentapeptide, known as lipid I. This Bradyrhizobium sp. (strain BTAi1 / ATCC BAA-1182) protein is Phospho-N-acetylmuramoyl-pentapeptide-transferase.